The following is a 1227-amino-acid chain: Protein transport protein Sec31A (1227 aa).

WD repeat units lie at residues 4–47, 64–111, 120–160, 166–206, 209–254, 258–298, and 301–342; these read KEID…EIFE, SSAH…AGDT, KHTG…TPMT, QPLE…PIIK, DHNN…SPLR, SHTR…VLYE, and TNMQ…DGLR. The WD 8; interaction with SEC13 repeat unit spans residues 397–430; sequence SFSFGGKLVTFENAKPQQQPGIDQQPQHHYVYVS. Disordered regions lie at residues 804–875, 905–1008, and 1040–1075; these read EAIK…YSQA, QPVA…GWND, and ADPQ…LGPY. Residues 905 to 924 are compositionally biased toward low complexity; the sequence is QPVAAPASASYPSPASNTNP. Pro residues predominate over residues 925–945; the sequence is PYLPAAQPVPSPLYPGQPQPS. Polar residues predominate over residues 995-1006; it reads PASQRTGPQNGW. The segment covering 1040 to 1049 has biased composition (low complexity); sequence ADPQAQMQQP. Residues 1057-1069 are compositionally biased toward polar residues; the sequence is PSFQPQQLSTGQQ.

It belongs to the WD repeat SEC31 family. As to quaternary structure, COPII is composed of at least 5 proteins: the SEC23/24 complex, the SEC13/31 complex and SAR1. SEC13 and SEC31 make a 2:2 tetramer that forms the edge element of the COPII outer coat. The tetramer self-assembles in multiple copies to form the complete polyhedral cage. Interacts (via WD 8) with SEC13.

It is found in the cytoplasm. The protein localises to the cytoplasmic vesicle. The protein resides in the COPII-coated vesicle membrane. Its subcellular location is the endoplasmic reticulum membrane. Functionally, component of the coat protein complex II (COPII) which promotes the formation of transport vesicles from the endoplasmic reticulum (ER). The coat has two main functions, the physical deformation of the endoplasmic reticulum membrane into vesicles and the selection of cargo molecules. This is Protein transport protein Sec31A (SEC31A) from Gallus gallus (Chicken).